Consider the following 584-residue polypeptide: Cilia- and flagella-associated protein 184 (584 aa).

Composition is skewed to basic and acidic residues over residues 1 to 18 (MDSH…EEGL), 42 to 57 (PEPK…REPE), and 67 to 82 (SKAK…HVEV). The tract at residues 1 to 243 (MDSHYGDIEG…ASTEEFEWTA (243 aa)) is disordered. Acidic residues predominate over residues 119–146 (DKDEDEDEDEDEDEDEDEDEDEDEDEGE). The span at 189–232 (AKEKARESLKKRDSEEIEGTDRERHKSTEEQLHPGEAKEEEKQK) shows a compositional bias: basic and acidic residues. Coiled coils occupy residues 317–470 (LAML…SNVQ) and 530–561 (LLGK…KRHH).

It belongs to the CFAP184 family. Forms a complex with CFAP263; the interaction is required for functional activity in cilia.

Its subcellular location is the cell projection. It localises to the cilium. The protein localises to the cytoplasm. The protein resides in the cytoskeleton. It is found in the microtubule organizing center. Its subcellular location is the centrosome. Functionally, in complex with CFAP263, acts as a regulator of ciliary beating that connects radial spoke 3 (RS3) to the inner dynein arm (IDA) and the nexin-dynein regulatory complex (N-DRC). The complex is positioned parallel to N-DRC and forms a connection between the arch at the base of RS3, the IDA tail and N-DRC. This chain is Cilia- and flagella-associated protein 184 (Cfap184), found in Mus musculus (Mouse).